The chain runs to 156 residues: Transcription elongation factor GreA (156 aa).

Residues 7–27 are a coiled coil; that stretch reads MTQEGLDKLKLELENLKLVKR.

This sequence belongs to the GreA/GreB family.

In terms of biological role, necessary for efficient RNA polymerase transcription elongation past template-encoded arresting sites. The arresting sites in DNA have the property of trapping a certain fraction of elongating RNA polymerases that pass through, resulting in locked ternary complexes. Cleavage of the nascent transcript by cleavage factors such as GreA or GreB allows the resumption of elongation from the new 3'terminus. GreA releases sequences of 2 to 3 nucleotides. In Lactococcus lactis subsp. lactis (strain IL1403) (Streptococcus lactis), this protein is Transcription elongation factor GreA.